The chain runs to 64 residues: Toxin Tce3 (64 aa).

Residues 1-62 (KDGYIIEHRG…IFDSNNNKCS (62 aa)) enclose the LCN-type CS-alpha/beta domain. 4 disulfide bridges follow: C11–C61, C15–C37, C23–C42, and C27–C44.

The protein belongs to the long (4 C-C) scorpion toxin superfamily. Sodium channel inhibitor family. Beta subfamily. Expressed by the venom gland.

It is found in the secreted. Functionally, inhibits the sodium (Nav) currents in an apparent irreversible manner. Produces small depolarization and induces repetitive firing in squid axons. Is specific for arthropods (crickets, triatomides, crabs and squids), but is non-toxic to mice. Shows antibacterial activity against both Gram-positive and Gram-negative bacteria. The sequence is that of Toxin Tce3 from Tityus cerroazul (Scorpion).